We begin with the raw amino-acid sequence, 114 residues long: V-type proton ATPase subunit G (114 aa).

S2 carries the post-translational modification N-acetylserine.

This sequence belongs to the V-ATPase G subunit family. V-ATPase is a heteromultimeric enzyme composed of a peripheral catalytic V1 complex (components A to H) attached to an integral membrane V0 proton pore complex (components: a, c, c', c'', d, e, f and VOA1).

The protein localises to the vacuole membrane. Its function is as follows. Subunit of the V1 complex of vacuolar(H+)-ATPase (V-ATPase), a multisubunit enzyme composed of a peripheral complex (V1) that hydrolyzes ATP and a membrane integral complex (V0) that translocates protons. V-ATPase is responsible for acidifying and maintaining the pH of intracellular compartments. This is V-type proton ATPase subunit G from Saccharomyces cerevisiae (strain ATCC 204508 / S288c) (Baker's yeast).